A 361-amino-acid polypeptide reads, in one-letter code: dTDP-glucose 4,6-dehydratase 1 (361 aa).

NAD(+) contacts are provided by residues 11 to 12, 32 to 35, 58 to 59, 80 to 84, and Thr-99; these read FI, DKLT, DI, and LAAES. A substrate-binding site is contributed by Ser-84. Residue Thr-133 participates in substrate binding. Catalysis depends on Asp-134, which acts as the Proton donor. Residues Glu-135 and Tyr-167 each act as proton acceptor in the active site. An NAD(+)-binding site is contributed by 167 to 171; that stretch reads YSASK. A substrate-binding site is contributed by Asn-196. Residue Asn-197 participates in NAD(+) binding. Substrate is bound by residues 206–207, 222–224, Arg-231, Asn-266, and 296–300; these read KL, PIY, and DRPGH.

Belongs to the NAD(P)-dependent epimerase/dehydratase family. dTDP-glucose dehydratase subfamily. As to quaternary structure, homodimer. It depends on NAD(+) as a cofactor.

The catalysed reaction is dTDP-alpha-D-glucose = dTDP-4-dehydro-6-deoxy-alpha-D-glucose + H2O. The protein operates within carbohydrate biosynthesis; dTDP-L-rhamnose biosynthesis. It participates in bacterial outer membrane biogenesis; LPS O-antigen biosynthesis. Its function is as follows. Catalyzes the dehydration of dTDP-D-glucose to form dTDP-6-deoxy-D-xylo-4-hexulose via a three-step process involving oxidation, dehydration and reduction. In Escherichia coli (strain K12), this protein is dTDP-glucose 4,6-dehydratase 1 (rfbB).